The chain runs to 320 residues: Acetyl-coenzyme A carboxylase carboxyl transferase subunit alpha (320 aa).

Residues 42–295 (IEEKALAALT…GDAIAKSFAD (254 aa)) enclose the CoA carboxyltransferase C-terminal domain.

Belongs to the AccA family. In terms of assembly, acetyl-CoA carboxylase is a heterohexamer composed of biotin carboxyl carrier protein (AccB), biotin carboxylase (AccC) and two subunits each of ACCase subunit alpha (AccA) and ACCase subunit beta (AccD).

It localises to the cytoplasm. It carries out the reaction N(6)-carboxybiotinyl-L-lysyl-[protein] + acetyl-CoA = N(6)-biotinyl-L-lysyl-[protein] + malonyl-CoA. The protein operates within lipid metabolism; malonyl-CoA biosynthesis; malonyl-CoA from acetyl-CoA: step 1/1. Functionally, component of the acetyl coenzyme A carboxylase (ACC) complex. First, biotin carboxylase catalyzes the carboxylation of biotin on its carrier protein (BCCP) and then the CO(2) group is transferred by the carboxyltransferase to acetyl-CoA to form malonyl-CoA. The protein is Acetyl-coenzyme A carboxylase carboxyl transferase subunit alpha of Rhodopseudomonas palustris (strain BisA53).